We begin with the raw amino-acid sequence, 949 residues long: MAM domain-containing glycosylphosphatidylinositol anchor protein 2 (949 aa).

Positions 1–25 (MDLVYGLVWLLTVLLEGISGQGVYA) are cleaved as a signal peptide. Ig-like domains follow at residues 27–127 (PTVR…IRVD) and 134–232 (PVVT…KMVS). Disulfide bonds link C62–C110 and C159–C216. N92, N213, and N237 each carry an N-linked (GlcNAc...) asparagine glycan. Ig-like domains are found at residues 242–328 (PSIK…NIIV), 340–436 (PDPY…VNIS), 442–533 (PNLT…ALVQ), and 540–627 (PAVE…FLVT). Disulfide bonds link C264–C310 and C359–C417. N434, N443, N504, N610, and N703 each carry an N-linked (GlcNAc...) asparagine glycan. 2 disulfide bridges follow: C465/C515 and C561/C611. Residues 638-738 (DTYNPVWQNR…TIRVIKYTGE (101 aa)) enclose the Fibronectin type-III domain. An MAM domain is found at 739–914 (FHCGFEDGNI…VSIAEGECAK (176 aa)). A lipid anchor (GPI-anchor amidated aspartate) is attached at D924. A propeptide spans 925–949 (GAVGILVHIWLFPVIILISILSPRR) (removed in mature form).

As to quaternary structure, interacts (through the Ig-like domains) with NLGN2. As to expression, expressed predominantly in neuronal tissue. Expressed in brain.

The protein localises to the cell membrane. Functionally, may be involved in cell-cell interactions. In Rattus norvegicus (Rat), this protein is MAM domain-containing glycosylphosphatidylinositol anchor protein 2 (Mdga2).